The chain runs to 422 residues: 3-phosphoshikimate 1-carboxyvinyltransferase (422 aa).

3-phosphoshikimate is bound by residues K20, S21, and R25. K20 contacts phosphoenolpyruvate. Phosphoenolpyruvate is bound by residues G91 and R119. Residues T163, S164, Q165, D305, Q328, and K332 each contribute to the 3-phosphoshikimate site. Phosphoenolpyruvate is bound at residue Q165. Catalysis depends on D305, which acts as the Proton acceptor. R336 and R377 together coordinate phosphoenolpyruvate.

Belongs to the EPSP synthase family. As to quaternary structure, monomer.

It localises to the cytoplasm. It catalyses the reaction 3-phosphoshikimate + phosphoenolpyruvate = 5-O-(1-carboxyvinyl)-3-phosphoshikimate + phosphate. Its pathway is metabolic intermediate biosynthesis; chorismate biosynthesis; chorismate from D-erythrose 4-phosphate and phosphoenolpyruvate: step 6/7. Functionally, catalyzes the transfer of the enolpyruvyl moiety of phosphoenolpyruvate (PEP) to the 5-hydroxyl of shikimate-3-phosphate (S3P) to produce enolpyruvyl shikimate-3-phosphate and inorganic phosphate. This Ruminiclostridium cellulolyticum (strain ATCC 35319 / DSM 5812 / JCM 6584 / H10) (Clostridium cellulolyticum) protein is 3-phosphoshikimate 1-carboxyvinyltransferase.